The primary structure comprises 237 residues: Probable transcriptional regulatory protein MCAP_0598 (237 aa).

It belongs to the TACO1 family.

It localises to the cytoplasm. The sequence is that of Probable transcriptional regulatory protein MCAP_0598 from Mycoplasma capricolum subsp. capricolum (strain California kid / ATCC 27343 / NCTC 10154).